A 275-amino-acid polypeptide reads, in one-letter code: Phosphatidylglycerol--prolipoprotein diacylglyceryl transferase (275 aa).

Helical transmembrane passes span 20 to 40, 58 to 78, 88 to 108, and 118 to 138; these read FTIH…LLLA, LLWA…VFQW, IIAI…GFIV, and LSSW…QGIG. An a 1,2-diacyl-sn-glycero-3-phospho-(1'-sn-glycerol)-binding site is contributed by Arg139. 2 helical membrane-spanning segments follow: residues 209–229 and 239–259; these read GEIF…IEGM and IRIS…ILII.

It belongs to the Lgt family.

It localises to the cell membrane. It carries out the reaction L-cysteinyl-[prolipoprotein] + a 1,2-diacyl-sn-glycero-3-phospho-(1'-sn-glycerol) = an S-1,2-diacyl-sn-glyceryl-L-cysteinyl-[prolipoprotein] + sn-glycerol 1-phosphate + H(+). It participates in protein modification; lipoprotein biosynthesis (diacylglyceryl transfer). Functionally, catalyzes the transfer of the diacylglyceryl group from phosphatidylglycerol to the sulfhydryl group of the N-terminal cysteine of a prolipoprotein, the first step in the formation of mature lipoproteins. In Limosilactobacillus reuteri (strain DSM 20016) (Lactobacillus reuteri), this protein is Phosphatidylglycerol--prolipoprotein diacylglyceryl transferase.